The following is a 124-amino-acid chain: Small ribosomal subunit protein uS12 (124 aa).

Position 89 is a 3-methylthioaspartic acid (Asp-89). Residues 105–124 (QGVKNRKQARSRYGAKKEKS) form a disordered region. The span at 108–118 (KNRKQARSRYG) shows a compositional bias: basic residues.

This sequence belongs to the universal ribosomal protein uS12 family. As to quaternary structure, part of the 30S ribosomal subunit. Contacts proteins S8 and S17. May interact with IF1 in the 30S initiation complex.

In terms of biological role, with S4 and S5 plays an important role in translational accuracy. Functionally, interacts with and stabilizes bases of the 16S rRNA that are involved in tRNA selection in the A site and with the mRNA backbone. Located at the interface of the 30S and 50S subunits, it traverses the body of the 30S subunit contacting proteins on the other side and probably holding the rRNA structure together. The combined cluster of proteins S8, S12 and S17 appears to hold together the shoulder and platform of the 30S subunit. The protein is Small ribosomal subunit protein uS12 of Mycobacteroides abscessus (strain ATCC 19977 / DSM 44196 / CCUG 20993 / CIP 104536 / JCM 13569 / NCTC 13031 / TMC 1543 / L948) (Mycobacterium abscessus).